The following is a 525-amino-acid chain: Bestrophin homolog 15 (525 aa).

A run of 4 helical transmembrane segments spans residues 36-56, 71-91, 237-257, and 273-293; these read LFMFIIAFITVSSVYRSNLII, FDQNMDFIPLTFMLGFFVTII, LAYPQVVFLAVRSYFFMALIA, and ILYPTVPFVMSILQFIFVVGW.

This sequence belongs to the anion channel-forming bestrophin (TC 1.A.46) family. Calcium-sensitive chloride channel subfamily. As to quaternary structure, forms oligomers.

The protein resides in the cell membrane. Its function is as follows. Forms chloride channels. The chain is Bestrophin homolog 15 (best-15) from Caenorhabditis elegans.